The chain runs to 675 residues: PML-RARA-regulated adapter molecule 1 (675 aa).

The span at 1 to 19 shows a compositional bias: polar residues; sequence MGSNQDFRNLQAKFQTSQP. Disordered stretches follow at residues 1-473 and 523-562; these read MGSN…GPIN and TDDS…PQQL. Basic and acidic residues predominate over residues 23 to 35; it reads ELFRKTPKPELNK. The span at 43–58 shows a compositional bias: polar residues; sequence TELSEQPKKSSQSELS. Residues 141-150 are compositionally biased toward basic and acidic residues; it reads PKPEFGELSK. Polar residues-rich tracts occupy residues 224-242, 251-264, and 322-331; these read RKSQ…SPSK, HSPQ…PKNN, and LQPSDLTRAS. Serine 374 bears the Phosphoserine mark. Residues 407–422 show a composition bias toward polar residues; that stretch reads SECSLPSASAGSSPQC. A compositionally biased stretch (pro residues) spans 462–471; the sequence is PAKPALPPGP. The segment covering 537–546 has biased composition (polar residues); the sequence is LSTQQATRWP. In terms of domain architecture, SH3 spans 578–656; it reads KAEREFRKKF…PRTALLPLET (79 aa).

In terms of assembly, interacts with SKAP2, LCP2 and DBNL. May interact with LYN. Interacts with NEK6. Post-translationally, may be phosphorylated on tyrosines. In terms of tissue distribution, expressed in bone marrow and mature neutrophils. Weakly expressed in macrophages and mast cells.

In terms of biological role, may be involved in integrin signaling in neutrophils. Binds to PtdIns(4)P. The polypeptide is PML-RARA-regulated adapter molecule 1 (Pram1) (Mus musculus (Mouse)).